A 366-amino-acid polypeptide reads, in one-letter code: MSKFKSLLLLFGTLILLSGCSNIEIFNAKGPVASSQKFLILYSIVFMLVICFVVLGMFAIFIYKYSYNKNAESGKMHHNAIIETIWFVIPIIIVAALAIPTVKTLYDYEKPPKSEKDPMVVYAVSAGYKWFFAYPDEHIETVNTLTIPKDRPVVFKLQAMDTMTSFWIPQLGGQKYAMTGMTMNWTLEASQTGTFRGRNSNFNGEGFSRQTFKVNAVSQKDYDKWVKEVKGKKTLDQDTFDKQLLPSTPNKALEFNGTHMAFVDPAADPEYIFYAYKRFNFELKDPNFTSEENMFKDVSDKPLIPARKAQITNANYKRHGMKLMILGNDEPYNNEFKKDESKNAKEMKKISKDAQDQDNDDHGGGH.

The first 19 residues, 1 to 19 (MSKFKSLLLLFGTLILLSG), serve as a signal peptide directing secretion. Residue Cys20 is the site of N-palmitoyl cysteine attachment. Cys20 is lipidated: S-diacylglycerol cysteine. The next 2 helical transmembrane spans lie at 38–58 (FLIL…LGMF) and 80–100 (AIIE…LAIP). The interval 330 to 366 (EPYNNEFKKDESKNAKEMKKISKDAQDQDNDDHGGGH) is disordered. Residues 335 to 366 (EFKKDESKNAKEMKKISKDAQDQDNDDHGGGH) are compositionally biased toward basic and acidic residues.

It belongs to the cytochrome c oxidase subunit 2 family.

The protein resides in the cell membrane. The catalysed reaction is 2 a quinol + O2 = 2 a quinone + 2 H2O. Its function is as follows. Catalyzes quinol oxidation with the concomitant reduction of oxygen to water. Subunit II transfers the electrons from a quinol to the binuclear center of the catalytic subunit I. The protein is Probable quinol oxidase subunit 2 (qoxA) of Staphylococcus aureus (strain USA300).